Consider the following 1788-residue polypeptide: U3 small nucleolar RNA-associated protein 10 (1788 aa).

The HEAT 1 repeat unit spans residues 585 to 622; sequence LDFQAVVPYAIVALSDPAKKVRRAAAELVTVLGSFYET. The tract at residues 884-905 is disordered; sequence PATKRRRVGSSEKSVDSQSPAD. HEAT repeat units follow at residues 926–962, 1049–1086, 1257–1294, 1301–1339, 1703–1740, and 1744–1781; these read AKHP…LVLS, QTVK…AYEH, LSIA…SESI, EALL…KYGK, EHHK…RLGE, and QSLP…TLGE.

This sequence belongs to the HEATR1/UTP10 family. Component of the ribosomal small subunit (SSU) processome.

The protein localises to the nucleus. Its subcellular location is the nucleolus. Functionally, involved in nucleolar processing of pre-18S ribosomal RNA. Involved in ribosome biosynthesis. The protein is U3 small nucleolar RNA-associated protein 10 (rbg-5) of Neurospora crassa (strain ATCC 24698 / 74-OR23-1A / CBS 708.71 / DSM 1257 / FGSC 987).